The primary structure comprises 311 residues: RNA polymerase sigma factor SigA4 (311 aa).

The segment at 78–148 (MLKANLRLVV…TRAIDNHART (71 aa)) is sigma-70 factor domain-2. The Interaction with polymerase core subunit RpoC motif lies at 102–105 (DLIQ). A sigma-70 factor domain-3 region spans residues 157-234 (EKISRIKKMT…DPKSLEPMDA (78 aa)). The sigma-70 factor domain-4 stretch occupies residues 247 to 304 (WLAHLTEREQQVLQLRFGLHDGEQHTLAEIGRRLNVSRERIRQVEARALQKLRVLSQQ). Residues 273–292 (LAEIGRRLNVSRERIRQVEA) constitute a DNA-binding region (H-T-H motif).

This sequence belongs to the sigma-70 factor family.

It localises to the cytoplasm. Functionally, sigma factors are initiation factors that promote the attachment of RNA polymerase to specific initiation sites and are then released. The chain is RNA polymerase sigma factor SigA4 (sigA4) from Synechococcus elongatus (strain ATCC 33912 / PCC 7942 / FACHB-805) (Anacystis nidulans R2).